The primary structure comprises 61 residues: Large ribosomal subunit protein uL30 (61 aa).

This sequence belongs to the universal ribosomal protein uL30 family. In terms of assembly, part of the 50S ribosomal subunit.

The sequence is that of Large ribosomal subunit protein uL30 from Thermobifida fusca (strain YX).